The chain runs to 139 residues: Putative nickel-responsive regulator (139 aa).

His79, His90, His92, and Cys98 together coordinate Ni(2+).

It belongs to the transcriptional regulatory CopG/NikR family. Requires Ni(2+) as cofactor.

Transcriptional regulator. The sequence is that of Putative nickel-responsive regulator from Geobacter sulfurreducens (strain ATCC 51573 / DSM 12127 / PCA).